The following is a 736-amino-acid chain: Elongation factor 2 (736 aa).

The 244-residue stretch at 19-262 (DQIRNIGIIA…MVIKFVPNPR (244 aa)) folds into the tr-type G domain. Residues 28–35 (AHVDHGKT), 94–98 (DTPGH), and 148–151 (NKVD) contribute to the GTP site. Diphthamide is present on histidine 602.

This sequence belongs to the TRAFAC class translation factor GTPase superfamily. Classic translation factor GTPase family. EF-G/EF-2 subfamily.

It is found in the cytoplasm. In terms of biological role, catalyzes the GTP-dependent ribosomal translocation step during translation elongation. During this step, the ribosome changes from the pre-translocational (PRE) to the post-translocational (POST) state as the newly formed A-site-bound peptidyl-tRNA and P-site-bound deacylated tRNA move to the P and E sites, respectively. Catalyzes the coordinated movement of the two tRNA molecules, the mRNA and conformational changes in the ribosome. The protein is Elongation factor 2 (fusA) of Aeropyrum pernix (strain ATCC 700893 / DSM 11879 / JCM 9820 / NBRC 100138 / K1).